Here is a 107-residue protein sequence, read N- to C-terminus: MTKSELIASLKADNPHLTERDVETIVSTIFDEISNALARGARVELRGFGAFTIKRRDARVGRNPRTGETVSVDEKVVPFFKAGKELRERVNNGTRKNGGSADAASGG.

The interval 87–107 is disordered; the sequence is RERVNNGTRKNGGSADAASGG.

It belongs to the bacterial histone-like protein family. As to quaternary structure, heterodimer of an alpha and a beta chain.

This protein is one of the two subunits of integration host factor, a specific DNA-binding protein that functions in genetic recombination as well as in transcriptional and translational control. This is Integration host factor subunit beta from Granulibacter bethesdensis (strain ATCC BAA-1260 / CGDNIH1).